Here is a 213-residue protein sequence, read N- to C-terminus: Peroxynitrite isomerase 2 (213 aa).

A GXWXGXG motif is present at residues 58–64; sequence GVWRGEG. Residues Lys176 and His203 each contribute to the heme b site.

It belongs to the nitrobindin family. In terms of assembly, homodimer. The cofactor is heme b.

It carries out the reaction peroxynitrite = nitrate. It functions in the pathway nitrogen metabolism. Heme-binding protein able to scavenge peroxynitrite and to protect free L-tyrosine against peroxynitrite-mediated nitration, by acting as a peroxynitrite isomerase that converts peroxynitrite to nitrate. Therefore, this protein likely plays a role in peroxynitrite sensing and in the detoxification of reactive nitrogen and oxygen species (RNS and ROS, respectively). Is able to bind nitric oxide (NO) in vitro, but may act as a sensor of peroxynitrite levels in vivo. This Rhodococcus jostii (strain RHA1) protein is Peroxynitrite isomerase 2.